The sequence spans 295 residues: Phosphatidylglycerol--prolipoprotein diacylglyceryl transferase (295 aa).

4 helical membrane-spanning segments follow: residues 28 to 48 (WYAL…VLAT), 69 to 89 (LLTW…VLFY), 101 to 121 (ILMV…VVIA), and 131 to 151 (IPKL…LLLG). Arginine 152 is a binding site for a 1,2-diacyl-sn-glycero-3-phospho-(1'-sn-glycerol). 3 helical membrane passes run 195-215 (QLYE…WLVW), 224-244 (GLIT…VEFF), and 268-288 (GLTM…WFVL).

The protein belongs to the Lgt family.

The protein localises to the cell inner membrane. It catalyses the reaction L-cysteinyl-[prolipoprotein] + a 1,2-diacyl-sn-glycero-3-phospho-(1'-sn-glycerol) = an S-1,2-diacyl-sn-glyceryl-L-cysteinyl-[prolipoprotein] + sn-glycerol 1-phosphate + H(+). It participates in protein modification; lipoprotein biosynthesis (diacylglyceryl transfer). Catalyzes the transfer of the diacylglyceryl group from phosphatidylglycerol to the sulfhydryl group of the N-terminal cysteine of a prolipoprotein, the first step in the formation of mature lipoproteins. The polypeptide is Phosphatidylglycerol--prolipoprotein diacylglyceryl transferase (Ruegeria pomeroyi (strain ATCC 700808 / DSM 15171 / DSS-3) (Silicibacter pomeroyi)).